The chain runs to 361 residues: MTGKKSSREKRRKRSSQEAAAALAAPDIVPALASGSSGSTSGCGSAGGCGSVSCCGNANFSGSVTGGGSGGSCWGGSSVERSERRKRRSTDSSSVSGSLQQETKYILPTLEKELFLAEHSDLEEGGLDLTVSLKPVSFYISDKKEMLQQCFCIIGEKKLQKMLPDVLKNCSIEEIKKLCQEQLELLSEKKILKILEGDNGMDSDMEEEADDGSKMGSDLVSQQDICIDSASSVRENKQPEGLELKQGKGEDSDVLSINADAYDSDIEGPCNEEAAAPEAPENTVQSEAGQIDDLEKDIEKSVNEILGLAESSPNEPKAATLAVPPPEDVQPSAQQLELLELEMRARAIKALMKAGDIKKPA.

A compositionally biased stretch (basic residues) spans 1 to 14; it reads MTGKKSSREKRRKR. 2 disordered regions span residues 1-28 and 67-100; these read MTGK…APDI and GGSG…GSLQ. The span at 19–28 shows a compositional bias: low complexity; the sequence is AAAALAAPDI. At serine 89 the chain carries Phosphoserine. Phosphothreonine is present on threonine 90. A Glycyl lysine isopeptide (Lys-Gly) (interchain with G-Cter in SUMO2) cross-link involves residue lysine 104. Phosphoserine is present on residues serine 120 and serine 203. 2 disordered regions span residues 198–218 and 230–331; these read DNGM…MGSD and ASSV…DVQP. The segment covering 199–210 has biased composition (acidic residues); it reads NGMDSDMEEEAD. Residues 234 to 251 show a composition bias toward basic and acidic residues; the sequence is RENKQPEGLELKQGKGED. Low complexity predominate over residues 272–281; it reads EEAAAPEAPE. Positions 281–311 form a coiled coil; the sequence is ENTVQSEAGQIDDLEKDIEKSVNEILGLAES. Serine 312 bears the Phosphoserine mark.

In terms of tissue distribution, ubiquitous.

Functionally, anti-apoptotic protein that modulates a caspase-10 dependent mitochondrial caspase-3/9 feedback amplification loop. In Homo sapiens (Human), this protein is Caspase activity and apoptosis inhibitor 1 (CAAP1).